A 328-amino-acid polypeptide reads, in one-letter code: GMP reductase (328 aa).

The active-site Thioimidate intermediate is the C176. 205-228 is an NADP(+) binding site; sequence IIADGGIRTHGDIAKSIRFGASMV.

Belongs to the IMPDH/GMPR family. GuaC type 2 subfamily.

The enzyme catalyses IMP + NH4(+) + NADP(+) = GMP + NADPH + 2 H(+). In terms of biological role, catalyzes the irreversible NADPH-dependent deamination of GMP to IMP. It functions in the conversion of nucleobase, nucleoside and nucleotide derivatives of G to A nucleotides, and in maintaining the intracellular balance of A and G nucleotides. This is GMP reductase from Streptococcus pneumoniae (strain Hungary19A-6).